Reading from the N-terminus, the 126-residue chain is Histone H2B type 3-B (126 aa).

Over residues 1–12 the composition is skewed to low complexity; it reads MPDPSKSAPAPK. The interval 1–35 is disordered; the sequence is MPDPSKSAPAPKKGSKKAVTKAQKKDGKKRKRGRK. Pro-2 carries the N-acetylproline modification. N6-(2-hydroxyisobutyryl)lysine; alternate is present on Lys-6. Lys-6 is subject to N6-(beta-hydroxybutyryl)lysine; alternate. At Lys-6 the chain carries N6-acetyllysine; alternate. N6-butyryllysine; alternate is present on Lys-6. Lys-6 bears the N6-crotonyllysine; alternate mark. An N6-lactoyllysine; alternate modification is found at Lys-6. Residue Lys-6 forms a Glycyl lysine isopeptide (Lys-Gly) (interchain with G-Cter in SUMO2); alternate linkage. An ADP-ribosylserine modification is found at Ser-7. An N6-(beta-hydroxybutyryl)lysine; alternate modification is found at Lys-12. 2 positions are modified to N6-acetyllysine; alternate: Lys-12 and Lys-13. An N6-crotonyllysine; alternate mark is found at Lys-12 and Lys-13. Residue Lys-12 is modified to N6-lactoyllysine; alternate. Lys-13 carries the post-translational modification N6-(2-hydroxyisobutyryl)lysine; alternate. Ser-15 carries the phosphoserine; by STK4/MST1 modification. N6-acetyllysine; alternate is present on residues Lys-16, Lys-17, Lys-21, and Lys-24. An N6-crotonyllysine; alternate mark is found at Lys-16, Lys-17, Lys-21, and Lys-24. N6-lactoyllysine; alternate occurs at positions 16, 17, 21, and 24. 2 positions are modified to N6-(beta-hydroxybutyryl)lysine; alternate: Lys-17 and Lys-21. Residue Lys-17 is modified to N6-glutaryllysine; alternate. An N6-(2-hydroxyisobutyryl)lysine; alternate mark is found at Lys-21 and Lys-24. At Lys-21 the chain carries N6-butyryllysine; alternate. Lys-21 participates in a covalent cross-link: Glycyl lysine isopeptide (Lys-Gly) (interchain with G-Cter in SUMO2); alternate. Lys-25 is subject to N6-(2-hydroxyisobutyryl)lysine. At Lys-35 the chain carries N6-(2-hydroxyisobutyryl)lysine; alternate. The residue at position 35 (Lys-35) is an N6-(beta-hydroxybutyryl)lysine; alternate. Residue Lys-35 is modified to N6-crotonyllysine; alternate. Lys-35 bears the N6-glutaryllysine; alternate mark. Lys-35 carries the post-translational modification N6-succinyllysine; alternate. Lys-35 participates in a covalent cross-link: Glycyl lysine isopeptide (Lys-Gly) (interchain with G-Cter in ubiquitin); alternate. Glu-36 carries the polyADP-ribosyl glutamic acid modification. Ser-37 is subject to Phosphoserine; by AMPK. Residues Lys-44, Lys-47, and Lys-58 each carry the N6-(2-hydroxyisobutyryl)lysine; alternate modification. The residue at position 44 (Lys-44) is an N6-lactoyllysine; alternate. Lys-44 and Lys-47 each carry N6-glutaryllysine; alternate. Lys-47 is subject to N6-methyllysine; alternate. Position 58 is an N6,N6-dimethyllysine; alternate (Lys-58). A Dimethylated arginine modification is found at Arg-80. Lys-86 bears the N6-(2-hydroxyisobutyryl)lysine; alternate mark. Lys-86 bears the N6-(beta-hydroxybutyryl)lysine; alternate mark. The residue at position 86 (Lys-86) is an N6-acetyllysine; alternate. An N6-lactoyllysine; alternate modification is found at Lys-86. Position 86 is an N6,N6,N6-trimethyllysine; alternate (Lys-86). Residues Arg-87 and Arg-93 each carry the omega-N-methylarginine modification. The residue at position 109 (Lys-109) is an N6-(2-hydroxyisobutyryl)lysine; alternate. N6-lactoyllysine; alternate is present on Lys-109. N6-glutaryllysine; alternate is present on Lys-109. N6-methyllysine; alternate is present on Lys-109. Ser-113 carries an O-linked (GlcNAc) serine glycan. Thr-116 bears the Phosphothreonine mark. N6-(2-hydroxyisobutyryl)lysine; alternate is present on residues Lys-117 and Lys-121. 2 positions are modified to N6-(beta-hydroxybutyryl)lysine; alternate: Lys-117 and Lys-121. 2 positions are modified to N6-lactoyllysine; alternate: Lys-117 and Lys-121. N6-glutaryllysine; alternate occurs at positions 117 and 121. N6-succinyllysine; alternate is present on residues Lys-117 and Lys-121. The residue at position 117 (Lys-117) is an N6-malonyllysine; alternate. Residue Lys-117 is modified to N6-methylated lysine; alternate. Lys-121 is covalently cross-linked (Glycyl lysine isopeptide (Lys-Gly) (interchain with G-Cter in ubiquitin); alternate).

Belongs to the histone H2B family. The nucleosome is a histone octamer containing two molecules each of H2A, H2B, H3 and H4 assembled in one H3-H4 heterotetramer and two H2A-H2B heterodimers. The octamer wraps approximately 147 bp of DNA. Monoubiquitination at Lys-35 (H2BK34Ub) by the MSL1/MSL2 dimer is required for histone H3 'Lys-4' (H3K4me) and 'Lys-79' (H3K79me) methylation and transcription activation at specific gene loci, such as HOXA9 and MEIS1 loci. Similarly, monoubiquitination at Lys-121 (H2BK120Ub) by the RNF20/40 complex gives a specific tag for epigenetic transcriptional activation and is also prerequisite for histone H3 'Lys-4' and 'Lys-79' methylation. It also functions cooperatively with the FACT dimer to stimulate elongation by RNA polymerase II. H2BK120Ub also acts as a regulator of mRNA splicing: deubiquitination by USP49 is required for efficient cotranscriptional splicing of a large set of exons. In terms of processing, phosphorylation at Ser-37 (H2BS36ph) by AMPK in response to stress promotes transcription. Phosphorylated on Ser-15 (H2BS14ph) by STK4/MST1 during apoptosis; which facilitates apoptotic chromatin condensation. Also phosphorylated on Ser-15 in response to DNA double strand breaks (DSBs), and in correlation with somatic hypermutation and immunoglobulin class-switch recombination. Post-translationally, glcNAcylation at Ser-113 promotes monoubiquitination of Lys-121. It fluctuates in response to extracellular glucose, and associates with transcribed genes. ADP-ribosylated by PARP1 or PARP2 on Ser-7 (H2BS6ADPr) in response to DNA damage. H2BS6ADPr promotes recruitment of CHD1L. Poly ADP-ribosylation on Glu-36 (H2BE35ADPr) by PARP1 regulates adipogenesis: it inhibits phosphorylation at Ser-37 (H2BS36ph), thereby blocking expression of pro-adipogenetic genes. In terms of processing, crotonylation (Kcr) is specifically present in male germ cells and marks testis-specific genes in post-meiotic cells, including X-linked genes that escape sex chromosome inactivation in haploid cells. Crotonylation marks active promoters and enhancers and confers resistance to transcriptional repressors. It is also associated with post-meiotically activated genes on autosomes. Post-translationally, lactylated in macrophages by EP300/P300 by using lactoyl-CoA directly derived from endogenous or exogenous lactate, leading to stimulates gene transcription.

It localises to the nucleus. It is found in the chromosome. Core component of nucleosome. Nucleosomes wrap and compact DNA into chromatin, limiting DNA accessibility to the cellular machineries which require DNA as a template. Histones thereby play a central role in transcription regulation, DNA repair, DNA replication and chromosomal stability. DNA accessibility is regulated via a complex set of post-translational modifications of histones, also called histone code, and nucleosome remodeling. This chain is Histone H2B type 3-B, found in Homo sapiens (Human).